Consider the following 465-residue polypeptide: MARDNENILEEWCLIESNPCIFYDMLKRMGATEISVEDVYSLSYFDDYINNKEIINMNHILGVDTYLGENNKTLDKENNVVDVIELYKNNICMEDKYNKLLKHHSYIYGIIFLFNIGKHYKNNKYIEHNVPDNLFFAKQVIPNACATQAILSIVLNKDIELNDEIKNIKTFSLNFDSSMKGLTLSNCTFLRNIHNSYKPPIYLDKEDVHHDKKKSEDSFHFVSYISFQDKVYLLDGLQSGPVLINADEQNKPNPNNNNNNKDNDNDNNNNNNNNNNNNNNNNNNNNNNNNNNIGMNGKDWIEISREHIKKEIDEICNSQTNNDVRFNIIAVMKDKEYIIQEYINIHRIVKQRVNIKLINLGENIELSDEINEDEFPLLNDIPSIENLPNNVDTLYNIVNKSTLEINYLQSLLHEQKEIKKLWNKELTFKFFNFYPFIMSSLNLMAKHKLLKDAYQKEKLKNATKS.

The UCH catalytic domain maps to 11 to 333 (EWCLIESNPC…VRFNIIAVMK (323 aa)). Catalysis depends on Cys-145, which acts as the Nucleophile. His-220 (proton donor) is an active-site residue. The interval 244–293 (INADEQNKPNPNNNNNNKDNDNDNNNNNNNNNNNNNNNNNNNNNNNNNNI) is disordered. The segment covering 251–292 (KPNPNNNNNNKDNDNDNNNNNNNNNNNNNNNNNNNNNNNNNN) has biased composition (low complexity). The 29-residue stretch at 432 to 460 (NFYPFIMSSLNLMAKHKLLKDAYQKEKLK) folds into the ULD domain.

Belongs to the peptidase C12 family.

It carries out the reaction Thiol-dependent hydrolysis of ester, thioester, amide, peptide and isopeptide bonds formed by the C-terminal Gly of ubiquitin (a 76-residue protein attached to proteins as an intracellular targeting signal).. In terms of biological role, thiol protease that recognizes and hydrolyzes a peptide bond at the C-terminal glycine of either ubiquitin or NEDD8. The sequence is that of Ubiquitin carboxyl-terminal hydrolase UCH54 from Plasmodium falciparum (isolate 3D7).